Reading from the N-terminus, the 176-residue chain is ATP-dependent protease subunit HslV (176 aa).

Threonine 2 is a catalytic residue. The Na(+) site is built by glycine 157, cysteine 160, and threonine 163.

It belongs to the peptidase T1B family. HslV subfamily. In terms of assembly, a double ring-shaped homohexamer of HslV is capped on each side by a ring-shaped HslU homohexamer. The assembly of the HslU/HslV complex is dependent on binding of ATP.

The protein resides in the cytoplasm. It catalyses the reaction ATP-dependent cleavage of peptide bonds with broad specificity.. Allosterically activated by HslU binding. Its function is as follows. Protease subunit of a proteasome-like degradation complex believed to be a general protein degrading machinery. The sequence is that of ATP-dependent protease subunit HslV from Salmonella gallinarum (strain 287/91 / NCTC 13346).